The primary structure comprises 307 residues: N-acetylglucosamine-1-phosphotransferase subunit gamma (307 aa).

An N-terminal signal peptide occupies residues 1-24 (MAGRLAGFLMLLGLASQGPAPAYA). The region spanning 69–171 (GKCFSLVEST…TFETPLVCHP (103 aa)) is the MRH domain. An intrachain disulfide couples Cys-71 to Cys-84. N-linked (GlcNAc...) asparagine glycans are attached at residues Asn-88 and Asn-115. Intrachain disulfides connect Cys-129-Cys-157 and Cys-142-Cys-169. One can recognise a DMAP1-binding domain in the interval 176 to 279 (VYPTLSEALQ…HTQPTETTHS (104 aa)).

As to quaternary structure, homodimer; disulfide-linked. Hexamer of two alpha (GNPTAB), two beta (GNPTAB) and two gamma (GNPTG) subunits; disulfide-linked. The alpha and/or the beta subunits of the enzyme constitute the catalytic subunits. Cys-245 mediates the formation of the interchain disulfide bond for formation of the homodimer. Cys-142, Cys-157 and Cys-169 are involved in intramolecular disulfide bonds formation. As to expression, widely expressed. Highly expressed in the liver, intestine, brain, thymus, testis and ovary.

Its subcellular location is the secreted. It localises to the golgi apparatus. Non-catalytic subunit of the N-acetylglucosamine-1-phosphotransferase complex, an enzyme that catalyzes the formation of mannose 6-phosphate (M6P) markers on high mannose type oligosaccharides in the Golgi apparatus. Binds and presents the high mannose glycans of the acceptor to the catalytic alpha and beta subunits (GNPTAB). Enhances the rate of N-acetylglucosamine-1-phosphate transfer to the oligosaccharides of acid hydrolase acceptors. The polypeptide is N-acetylglucosamine-1-phosphotransferase subunit gamma (Gnptg) (Mus musculus (Mouse)).